The following is a 208-amino-acid chain: N-(5'-phosphoribosyl)anthranilate isomerase (208 aa).

The protein belongs to the TrpF family.

The catalysed reaction is N-(5-phospho-beta-D-ribosyl)anthranilate = 1-(2-carboxyphenylamino)-1-deoxy-D-ribulose 5-phosphate. It participates in amino-acid biosynthesis; L-tryptophan biosynthesis; L-tryptophan from chorismate: step 3/5. The polypeptide is N-(5'-phosphoribosyl)anthranilate isomerase (Lactiplantibacillus plantarum (strain ATCC BAA-793 / NCIMB 8826 / WCFS1) (Lactobacillus plantarum)).